The sequence spans 399 residues: Putative 8-amino-7-oxononanoate synthase (399 aa).

R23 is a substrate binding site. Residue 110-111 participates in pyridoxal 5'-phosphate binding; it reads GY. H135 lines the substrate pocket. Pyridoxal 5'-phosphate-binding positions include S183, 208 to 211, and 239 to 242; these read DEAH and TLSK. K242 is subject to N6-(pyridoxal phosphate)lysine. A substrate-binding site is contributed by T364.

It belongs to the class-II pyridoxal-phosphate-dependent aminotransferase family. BioF subfamily. Homodimer. Pyridoxal 5'-phosphate serves as cofactor.

It catalyses the reaction 6-carboxyhexanoyl-[ACP] + L-alanine + H(+) = (8S)-8-amino-7-oxononanoate + holo-[ACP] + CO2. Its pathway is cofactor biosynthesis; biotin biosynthesis. In terms of biological role, catalyzes the decarboxylative condensation of pimeloyl-[acyl-carrier protein] and L-alanine to produce 8-amino-7-oxononanoate (AON), [acyl-carrier protein], and carbon dioxide. This chain is Putative 8-amino-7-oxononanoate synthase (bioF), found in Cyanothece sp. (strain PCC 7425 / ATCC 29141).